Consider the following 154-residue polypeptide: Cytochrome c-type biogenesis protein CcmE (154 aa).

At 1–8 the chain is on the cytoplasmic side; that stretch reads MHPQRKQR. Residues 9-29 traverse the membrane as a helical; Signal-anchor for type II membrane protein segment; the sequence is LMIVLFIVVFSSLAVGLIAYA. The Periplasmic segment spans residues 30–154; sequence LRENINLFYP…ATCGGLNYGA (125 aa). Heme is bound by residues His124 and Tyr128.

Belongs to the CcmE/CycJ family.

The protein localises to the cell inner membrane. In terms of biological role, heme chaperone required for the biogenesis of c-type cytochromes. Transiently binds heme delivered by CcmC and transfers the heme to apo-cytochromes in a process facilitated by CcmF and CcmH. The chain is Cytochrome c-type biogenesis protein CcmE from Cellvibrio japonicus (strain Ueda107) (Pseudomonas fluorescens subsp. cellulosa).